We begin with the raw amino-acid sequence, 303 residues long: N-acetyl-D-glucosamine kinase (303 aa).

Residues 4 to 11 (GFDIGGTK) and 133 to 140 (GVGGGLVL) contribute to the ATP site. H157, C177, C179, and C184 together coordinate Zn(2+).

The protein belongs to the ROK (NagC/XylR) family. NagK subfamily.

The catalysed reaction is N-acetyl-D-glucosamine + ATP = N-acetyl-D-glucosamine 6-phosphate + ADP + H(+). The protein operates within cell wall biogenesis; peptidoglycan recycling. In terms of biological role, catalyzes the phosphorylation of N-acetyl-D-glucosamine (GlcNAc) derived from cell-wall degradation, yielding GlcNAc-6-P. The polypeptide is N-acetyl-D-glucosamine kinase (Salmonella heidelberg (strain SL476)).